A 272-amino-acid chain; its full sequence is Ribosomal RNA small subunit methyltransferase A (272 aa).

Asn18, Leu20, Gly45, Glu66, Asp91, and Asn113 together coordinate S-adenosyl-L-methionine.

Belongs to the class I-like SAM-binding methyltransferase superfamily. rRNA adenine N(6)-methyltransferase family. RsmA subfamily.

The protein resides in the cytoplasm. It carries out the reaction adenosine(1518)/adenosine(1519) in 16S rRNA + 4 S-adenosyl-L-methionine = N(6)-dimethyladenosine(1518)/N(6)-dimethyladenosine(1519) in 16S rRNA + 4 S-adenosyl-L-homocysteine + 4 H(+). Its function is as follows. Specifically dimethylates two adjacent adenosines (A1518 and A1519) in the loop of a conserved hairpin near the 3'-end of 16S rRNA in the 30S particle. May play a critical role in biogenesis of 30S subunits. The protein is Ribosomal RNA small subunit methyltransferase A of Photorhabdus laumondii subsp. laumondii (strain DSM 15139 / CIP 105565 / TT01) (Photorhabdus luminescens subsp. laumondii).